The primary structure comprises 222 residues: Uridine diphosphate glucose pyrophosphatase NUDT14 (222 aa).

Residues 38–206 (KTHDSVTILM…DVPKTLGVIF (169 aa)) enclose the Nudix hydrolase domain. Residues 111-129 (PGLSLEEVACKEAWEECGY) carry the Nudix box motif.

Belongs to the Nudix hydrolase family. Homodimer. Requires Mg(2+) as cofactor.

It localises to the cytoplasm. The catalysed reaction is UDP-sugar + H2O = UMP + alpha-D-aldose 1-phosphate.. Its function is as follows. Hydrolyzes UDP-glucose to glucose 1-phosphate and UMP and ADP-ribose to ribose 5-phosphate and AMP. The physiological substrate is probably UDP-glucose. Poor activity on other substrates such as ADP-glucose, CDP-glucose, GDP-glucose and GDP-mannose. The polypeptide is Uridine diphosphate glucose pyrophosphatase NUDT14 (NUDT14) (Bos taurus (Bovine)).